The sequence spans 345 residues: Anthranilate phosphoribosyltransferase (345 aa).

Residues Gly-80, 83-84, Thr-88, 90-93, 108-116, and Ser-120 each bind 5-phospho-alpha-D-ribose 1-diphosphate; these read GD, NIST, and KHGNRSVSS. An anthranilate-binding site is contributed by Gly-80. Residue Ser-92 coordinates Mg(2+). Asn-111 is a binding site for anthranilate. Position 166 (Arg-166) interacts with anthranilate. Mg(2+) is bound by residues Asp-225 and Glu-226.

It belongs to the anthranilate phosphoribosyltransferase family. As to quaternary structure, homodimer. The cofactor is Mg(2+).

The enzyme catalyses N-(5-phospho-beta-D-ribosyl)anthranilate + diphosphate = 5-phospho-alpha-D-ribose 1-diphosphate + anthranilate. It functions in the pathway amino-acid biosynthesis; L-tryptophan biosynthesis; L-tryptophan from chorismate: step 2/5. Functionally, catalyzes the transfer of the phosphoribosyl group of 5-phosphorylribose-1-pyrophosphate (PRPP) to anthranilate to yield N-(5'-phosphoribosyl)-anthranilate (PRA). In Acetivibrio thermocellus (strain ATCC 27405 / DSM 1237 / JCM 9322 / NBRC 103400 / NCIMB 10682 / NRRL B-4536 / VPI 7372) (Clostridium thermocellum), this protein is Anthranilate phosphoribosyltransferase.